A 255-amino-acid chain; its full sequence is HTH-type transcriptional regulator SkgA (255 aa).

Positions 3 to 72 (VYTVKQMARL…LKDIQAALDQ (70 aa)) constitute an HTH merR-type domain. The segment at residues 6–25 (VKQMARLSGVSVRALHHYDA) is a DNA-binding region (H-T-H motif).

Its function is as follows. Regulates the induction of katG (catalase-peroxidase) in stationary phase. The sequence is that of HTH-type transcriptional regulator SkgA (skgA) from Caulobacter vibrioides (strain ATCC 19089 / CIP 103742 / CB 15) (Caulobacter crescentus).